Here is a 270-residue protein sequence, read N- to C-terminus: Putative phosphoenolpyruvate synthase regulatory protein (270 aa).

149 to 156 (GVSRSGKT) serves as a coordination point for ADP.

Belongs to the pyruvate, phosphate/water dikinase regulatory protein family. PSRP subfamily.

The catalysed reaction is [pyruvate, water dikinase] + ADP = [pyruvate, water dikinase]-phosphate + AMP + H(+). The enzyme catalyses [pyruvate, water dikinase]-phosphate + phosphate + H(+) = [pyruvate, water dikinase] + diphosphate. In terms of biological role, bifunctional serine/threonine kinase and phosphorylase involved in the regulation of the phosphoenolpyruvate synthase (PEPS) by catalyzing its phosphorylation/dephosphorylation. The sequence is that of Putative phosphoenolpyruvate synthase regulatory protein from Pseudoalteromonas atlantica (strain T6c / ATCC BAA-1087).